The following is a 124-amino-acid chain: Large ribosomal subunit protein uL14 (124 aa).

This sequence belongs to the universal ribosomal protein uL14 family. As to quaternary structure, part of the 50S ribosomal subunit. Forms a cluster with proteins L3 and L19. In the 70S ribosome, L14 and L19 interact and together make contacts with the 16S rRNA in bridges B5 and B8.

Its function is as follows. Binds to 23S rRNA. Forms part of two intersubunit bridges in the 70S ribosome. The chain is Large ribosomal subunit protein uL14 from Clostridium novyi (strain NT).